A 161-amino-acid polypeptide reads, in one-letter code: SsrA-binding protein (161 aa).

Residues 138–161 (DKRTDSKEKDWNRDKARIMKSSLR) are disordered. Positions 139 to 154 (KRTDSKEKDWNRDKAR) are enriched in basic and acidic residues.

It belongs to the SmpB family.

It localises to the cytoplasm. Functionally, required for rescue of stalled ribosomes mediated by trans-translation. Binds to transfer-messenger RNA (tmRNA), required for stable association of tmRNA with ribosomes. tmRNA and SmpB together mimic tRNA shape, replacing the anticodon stem-loop with SmpB. tmRNA is encoded by the ssrA gene; the 2 termini fold to resemble tRNA(Ala) and it encodes a 'tag peptide', a short internal open reading frame. During trans-translation Ala-aminoacylated tmRNA acts like a tRNA, entering the A-site of stalled ribosomes, displacing the stalled mRNA. The ribosome then switches to translate the ORF on the tmRNA; the nascent peptide is terminated with the 'tag peptide' encoded by the tmRNA and targeted for degradation. The ribosome is freed to recommence translation, which seems to be the essential function of trans-translation. This Aliivibrio fischeri (strain MJ11) (Vibrio fischeri) protein is SsrA-binding protein.